Consider the following 174-residue polypeptide: uncharacterized protein (174 aa).

This is an uncharacterized protein from Dictyostelium discoideum (Social amoeba).